Here is a 508-residue protein sequence, read N- to C-terminus: Photosystem II CP47 reaction center protein (508 aa).

Transmembrane regions (helical) follow at residues 21–36, 101–115, 140–156, 203–218, 237–252, and 457–472; these read SVHI…WAGS, IVFS…IWHW, GIHL…FGAF, IAAG…FHLS, VLSS…AFVV, and SFAL…HGAR.

The protein belongs to the PsbB/PsbC family. PsbB subfamily. As to quaternary structure, PSII is composed of 1 copy each of membrane proteins PsbA, PsbB, PsbC, PsbD, PsbE, PsbF, PsbH, PsbI, PsbJ, PsbK, PsbL, PsbM, PsbT, PsbX, PsbY, PsbZ, Psb30/Ycf12, at least 3 peripheral proteins of the oxygen-evolving complex and a large number of cofactors. It forms dimeric complexes. Requires Binds multiple chlorophylls. PSII binds additional chlorophylls, carotenoids and specific lipids. as cofactor.

Its subcellular location is the plastid. The protein resides in the chloroplast thylakoid membrane. Functionally, one of the components of the core complex of photosystem II (PSII). It binds chlorophyll and helps catalyze the primary light-induced photochemical processes of PSII. PSII is a light-driven water:plastoquinone oxidoreductase, using light energy to abstract electrons from H(2)O, generating O(2) and a proton gradient subsequently used for ATP formation. This chain is Photosystem II CP47 reaction center protein, found in Carica papaya (Papaya).